We begin with the raw amino-acid sequence, 939 residues long: Isoleucine--tRNA ligase (939 aa).

Residues 57–67 carry the 'HIGH' region motif; sequence PYANGHIHIGH. L-isoleucyl-5'-AMP is bound at residue Glu-563. A 'KMSKS' region motif is present at residues 604–608; sequence KMSKS. ATP is bound at residue Lys-607. Zn(2+) is bound by residues Cys-903, Cys-906, Cys-921, and Cys-924.

It belongs to the class-I aminoacyl-tRNA synthetase family. IleS type 1 subfamily. In terms of assembly, monomer. Zn(2+) is required as a cofactor.

It localises to the cytoplasm. It carries out the reaction tRNA(Ile) + L-isoleucine + ATP = L-isoleucyl-tRNA(Ile) + AMP + diphosphate. In terms of biological role, catalyzes the attachment of isoleucine to tRNA(Ile). As IleRS can inadvertently accommodate and process structurally similar amino acids such as valine, to avoid such errors it has two additional distinct tRNA(Ile)-dependent editing activities. One activity is designated as 'pretransfer' editing and involves the hydrolysis of activated Val-AMP. The other activity is designated 'posttransfer' editing and involves deacylation of mischarged Val-tRNA(Ile). The sequence is that of Isoleucine--tRNA ligase from Sulfurihydrogenibium sp. (strain YO3AOP1).